The chain runs to 61 residues: L-amino-acid oxidase (61 aa).

Met43 to Ala44 contacts FAD.

This sequence belongs to the flavin monoamine oxidase family. FIG1 subfamily. As to quaternary structure, homodimer; non-covalently linked. FAD is required as a cofactor. In terms of processing, N-glycosylated. In terms of tissue distribution, expressed by the venom gland.

The protein resides in the secreted. The enzyme catalyses an L-alpha-amino acid + O2 + H2O = a 2-oxocarboxylate + H2O2 + NH4(+). The catalysed reaction is L-leucine + O2 + H2O = 4-methyl-2-oxopentanoate + H2O2 + NH4(+). In terms of biological role, catalyzes an oxidative deamination of predominantly hydrophobic and aromatic L-amino acids, thus producing hydrogen peroxide that may contribute to the diverse toxic effects of this enzyme. Shows activity on L-Leu. Exhibits diverse biological activities, such as apoptosis, antibacterial activities against both Gram-negative and Gram-positive bacteria and antiparasitic activities, as well as induction of platelet aggregation. Effects of snake L-amino oxidases on platelets are controversial, since they either induce aggregation or inhibit agonist-induced aggregation. These different effects are probably due to different experimental conditions. This protein may also induce hemorrhage, hemolysis, and edema. This is L-amino-acid oxidase from Crotalus durissus cascavella (Northeastern Brazilian rattlesnake).